The primary structure comprises 806 residues: Transitional endoplasmic reticulum ATPase (806 aa).

The residue at position 2 (alanine 2) is an N-acetylalanine. Serine 3 and serine 7 each carry phosphoserine. Lysine 8 is covalently cross-linked (Glycyl lysine isopeptide (Lys-Gly) (interchain with G-Cter in SUMO2)). At serine 13 the chain carries Phosphoserine. A Glycyl lysine isopeptide (Lys-Gly) (interchain with G-Cter in SUMO2) cross-link involves residue lysine 18. Residue serine 37 is modified to Phosphoserine. 247 to 253 (PGTGKTL) contributes to the ATP binding site. Lysine 315 carries the N6,N6,N6-trimethyllysine; by VCPKMT modification. 2 residues coordinate ATP: asparagine 348 and histidine 384. Threonine 436 carries the phosphothreonine modification. Serine 462 carries the phosphoserine modification. 2 positions are modified to N6-acetyllysine: lysine 502 and lysine 505. 521 to 526 (GCGKTL) provides a ligand contact to ATP. Residue lysine 668 is modified to N6-acetyllysine; alternate. At lysine 668 the chain carries N6-succinyllysine; alternate. Serine 702 bears the Phosphoserine mark. The interval 708-727 (RRERERQTNPSAMEVEEDDP) is disordered. An N6-acetyllysine modification is found at lysine 754. Residues 768–806 (FGSFRFPSGNQGGAGPSQGSGGGTGGSVYTEDNDDDLYG) form a disordered region. Residues serine 770, serine 775, and serine 787 each carry the phosphoserine modification. The segment covering 777-793 (NQGGAGPSQGSGGGTGG) has biased composition (gly residues). Positions 797 to 806 (TEDNDDDLYG) are interaction with UBXN6. The short motif at 802 to 806 (DDLYG) is the PIM motif element. Tyrosine 805 is subject to Phosphotyrosine.

Belongs to the AAA ATPase family. Homohexamer. Forms a ring-shaped particle of 12.5 nm diameter, that displays 6-fold radial symmetry. Part of a ternary complex containing STX5A, NSFL1C and VCP. NSFL1C forms a homotrimer that binds to one end of a VCP homohexamer. The complex binds to membranes enriched in phosphatidylethanolamine-containing lipids and promotes Golgi membrane fusion. Binds to a heterodimer of NPLOC4 and UFD1, binding to this heterodimer inhibits Golgi-membrane fusion. Interaction with VCIP135 leads to dissociation of the complex via ATP hydrolysis by VCP. Part of a ternary complex containing NPLOC4, UFD1 and VCP. Interacts with NSFL1C-like protein p37; the complex has membrane fusion activity and is required for Golgi and endoplasmic reticulum biogenesis. Interacts with SELENOS and SYVN1, as well as with DERL1 (via SHP-box motif), DERL2 and DERL3; which probably transfer misfolded proteins from the ER to VCP. Interacts with SVIP and forms a complex with SVIP and DERL1. Component of a complex required to couple retrotranslocation, ubiquitination and deglycosylation composed of NGLY1, SAKS1, AMFR, VCP and RAD23B. Part of a complex composed of STUB1/CHIP, VCP/p97, CHRNA3, and UBXN2A that modulates the ubiquitination and endoplasmic reticulum-associated degradation (ERAD) of CHRNA3. Within the complex UBXN2A acts as a scaffold protein required for the interaction of CHRNA3 with VCP/p97, this interaction also inhibits CHRNA3 ubiquitination by STUB1/CHIP and subsequently ERAD. Interacts with UBXN2A (via UBX domain); the interaction is required for the interaction of CHRNA3 in the STUB1-VCP-UBXN2A complex. Directly interacts with UBXN4 and RNF19A. Interacts with CASR. Interacts with UBE4B and YOD1. Interacts with clathrin. Interacts with RNF103. Interacts with TRIM13 and TRIM21. Component of a VCP/p97-AMFR/gp78 complex that participates in the final step of the endoplasmic reticulum-associated degradation (ERAD) of HMGCR. Interacts directly with AMFR/gp78 (via its VIM). Interacts with RHBDD1 (via C-terminal domain). Interacts with SPRTN; leading to recruitment to stalled replication forks. Interacts with WASHC5. Interacts with UBOX5. Interacts (via N-terminus) with UBXN7, UBXN8, and probably several other UBX domain-containing proteins (via UBX domains); the interactions are mutually exclusive with VIM-dependent interactions such as those with AMFR and SELENOS. Forms a complex with UBQLN1 and UBXN4. Interacts (via the PIM motif) with RNF31 (via the PUB domain). Interacts with RIGI and RNF125; interaction takes place when RIGI is ubiquitinated via 'Lys-63'-linked ubiquitin on its CARD domains, leading to recruit RNF125 and promote ubiquitination and degradation of RIGI. Interacts with BAG6. Interacts with UBXN10. Interacts with UBXN6; the interaction with UBXN6 is direct and competitive with UFD1. Forms a ternary complex with CAV1 and UBXN6. Interacts with PLAA, UBXN6 and YOD1; may form a complex involved in macroautophagy. Interacts with ANKZF1. Interacts with ubiquitin-binding protein FAF1. Interacts with ZFAND2B (via VIM motif); the interaction is direct. Interacts with ZFAND1 (via its ubiquitin-like region); this interaction occurs in an arsenite-dependent manner. Interacts with CCDC47. Interacts with UBAC2. Interacts with LMBR1L. Interacts with ATXN3. Interacts with TEX264; bridging VCP to covalent DNA-protein cross-links (DPCs). Interacts with FBXL4. In terms of processing, phosphorylated by tyrosine kinases in response to T-cell antigen receptor activation. Phosphorylated in mitotic cells. Post-translationally, ISGylated. Methylation at Lys-315 catalyzed by VCPKMT is increased in the presence of ASPSCR1. Lys-315 methylation may decrease ATPase activity.

It localises to the cytoplasm. It is found in the cytosol. The protein resides in the endoplasmic reticulum. The protein localises to the nucleus. Its subcellular location is the stress granule. It catalyses the reaction ATP + H2O = ADP + phosphate + H(+). In terms of biological role, necessary for the fragmentation of Golgi stacks during mitosis and for their reassembly after mitosis. Involved in the formation of the transitional endoplasmic reticulum (tER). The transfer of membranes from the endoplasmic reticulum to the Golgi apparatus occurs via 50-70 nm transition vesicles which derive from part-rough, part-smooth transitional elements of the endoplasmic reticulum (tER). Vesicle budding from the tER is an ATP-dependent process. The ternary complex containing UFD1, VCP and NPLOC4 binds ubiquitinated proteins and is necessary for the export of misfolded proteins from the ER to the cytoplasm, where they are degraded by the proteasome. The NPLOC4-UFD1-VCP complex regulates spindle disassembly at the end of mitosis and is necessary for the formation of a closed nuclear envelope. Regulates E3 ubiquitin-protein ligase activity of RNF19A. Component of the VCP/p97-AMFR/gp78 complex that participates in the final step of the sterol-mediated ubiquitination and endoplasmic reticulum-associated degradation (ERAD) of HMGCR. Mediates the endoplasmic reticulum-associated degradation of CHRNA3 in cortical neurons as part of the STUB1-VCP-UBXN2A complex. Involved in endoplasmic reticulum stress-induced pre-emptive quality control, a mechanism that selectively attenuates the translocation of newly synthesized proteins into the endoplasmic reticulum and reroutes them to the cytosol for proteasomal degradation. Involved in clearance process by mediating G3BP1 extraction from stress granules. Also involved in DNA damage response: recruited to double-strand breaks (DSBs) sites in a RNF8- and RNF168-dependent manner and promotes the recruitment of TP53BP1 at DNA damage sites. Recruited to stalled replication forks by SPRTN: may act by mediating extraction of DNA polymerase eta (POLH) to prevent excessive translesion DNA synthesis and limit the incidence of mutations induced by DNA damage. Together with SPRTN metalloprotease, involved in the repair of covalent DNA-protein cross-links (DPCs) during DNA synthesis. Involved in interstrand cross-link repair in response to replication stress by mediating unloading of the ubiquitinated CMG helicase complex. Mediates extraction of PARP1 trapped to chromatin: recognizes and binds ubiquitinated PARP1 and promotes its removal. Required for cytoplasmic retrotranslocation of stressed/damaged mitochondrial outer-membrane proteins and their subsequent proteasomal degradation. Essential for the maturation of ubiquitin-containing autophagosomes and the clearance of ubiquitinated protein by autophagy. Acts as a negative regulator of type I interferon production by interacting with RIGI: interaction takes place when RIGI is ubiquitinated via 'Lys-63'-linked ubiquitin on its CARD domains, leading to recruit RNF125 and promote ubiquitination and degradation of RIGI. May play a role in the ubiquitin-dependent sorting of membrane proteins to lysosomes where they undergo degradation. May more particularly play a role in caveolins sorting in cells. By controlling the steady-state expression of the IGF1R receptor, indirectly regulates the insulin-like growth factor receptor signaling pathway. The polypeptide is Transitional endoplasmic reticulum ATPase (VCP) (Homo sapiens (Human)).